Consider the following 63-residue polypeptide: uncharacterized protein (63 aa).

A signal peptide spans 1-21 (MYLSLLLILLAWTLWLGNSLA).

This is an uncharacterized protein from Haemophilus influenzae (strain ATCC 51907 / DSM 11121 / KW20 / Rd).